Reading from the N-terminus, the 455-residue chain is uncharacterized protein (455 aa).

This is an uncharacterized protein from Acanthamoeba polyphaga (Amoeba).